A 343-amino-acid polypeptide reads, in one-letter code: Phosphate acyltransferase (343 aa).

It belongs to the PlsX family. In terms of assembly, homodimer. Probably interacts with PlsY.

It localises to the cytoplasm. The catalysed reaction is a fatty acyl-[ACP] + phosphate = an acyl phosphate + holo-[ACP]. It participates in lipid metabolism; phospholipid metabolism. Functionally, catalyzes the reversible formation of acyl-phosphate (acyl-PO(4)) from acyl-[acyl-carrier-protein] (acyl-ACP). This enzyme utilizes acyl-ACP as fatty acyl donor, but not acyl-CoA. The polypeptide is Phosphate acyltransferase (Halorhodospira halophila (strain DSM 244 / SL1) (Ectothiorhodospira halophila (strain DSM 244 / SL1))).